The following is a 250-amino-acid chain: MSPNHTPDTASVFQLKGSMLAITVLELARNDLEALDRQLAAKVAQAPNFFSNTPLVLALDKLPADEGAIDLPGLMRICRHHGLRTLAIRANRIEDIAAAIAIDLPVLPPSGARERPLEPEPEVVKKPEPAPAPPPPPEPEVRPTRIITSPVRGGQQIYAQGGDLVVTASVSPGAELLADGNIHVYGAMRGRALAGIKGNTKARIFCQQMTAEMVSIAGQYKVCEDLRRDPLWGTSVQVSLSGDVLNITRL.

The segment at 110–143 is disordered; sequence SGARERPLEPEPEVVKKPEPAPAPPPPPEPEVRP. Residues 112 to 128 are compositionally biased toward basic and acidic residues; that stretch reads ARERPLEPEPEVVKKPE. Over residues 129 to 138 the composition is skewed to pro residues; that stretch reads PAPAPPPPPE.

It belongs to the MinC family. As to quaternary structure, interacts with MinD and FtsZ.

In terms of biological role, cell division inhibitor that blocks the formation of polar Z ring septums. Rapidly oscillates between the poles of the cell to destabilize FtsZ filaments that have formed before they mature into polar Z rings. Prevents FtsZ polymerization. The sequence is that of Probable septum site-determining protein MinC from Pseudomonas putida (strain ATCC 47054 / DSM 6125 / CFBP 8728 / NCIMB 11950 / KT2440).